Here is a 250-residue protein sequence, read N- to C-terminus: PF03932 family protein CutC (250 aa).

It belongs to the CutC family.

It localises to the cytoplasm. The polypeptide is PF03932 family protein CutC (Vibrio vulnificus (strain YJ016)).